The chain runs to 290 residues: UPF0750 membrane protein YpjC (290 aa).

6 consecutive transmembrane segments (helical) span residues 9–29, 47–67, 75–95, 106–126, 146–166, and 179–199; these read NIFFILIGAAIFSFGLVHFNM, ALFHISPSISNLVLNIPIFFI, TMFVYTLVGTVALSLFLSIFQ, DLALAALFAGVFIGAGLGIIF, FGIPMGRTMFAFDACVIILSL, and LVAVFVAARLIDFIQEGGYAA.

Belongs to the UPF0750 family.

Its subcellular location is the cell membrane. The chain is UPF0750 membrane protein YpjC (ypjC) from Bacillus subtilis (strain 168).